The primary structure comprises 223 residues: Deoxyribose-phosphate aldolase (223 aa).

Asp91 acts as the Proton donor/acceptor in catalysis. The Schiff-base intermediate with acetaldehyde role is filled by Lys154. Lys183 acts as the Proton donor/acceptor in catalysis.

This sequence belongs to the DeoC/FbaB aldolase family. DeoC type 1 subfamily.

It is found in the cytoplasm. It catalyses the reaction 2-deoxy-D-ribose 5-phosphate = D-glyceraldehyde 3-phosphate + acetaldehyde. Its pathway is carbohydrate degradation; 2-deoxy-D-ribose 1-phosphate degradation; D-glyceraldehyde 3-phosphate and acetaldehyde from 2-deoxy-alpha-D-ribose 1-phosphate: step 2/2. Catalyzes a reversible aldol reaction between acetaldehyde and D-glyceraldehyde 3-phosphate to generate 2-deoxy-D-ribose 5-phosphate. The protein is Deoxyribose-phosphate aldolase of Geobacillus sp. (strain WCH70).